Here is a 188-residue protein sequence, read N- to C-terminus: Adrenodoxin, mitochondrial (188 aa).

The transit peptide at 1–64 (MAAAPGARLL…RPLSVSARAR (64 aa)) directs the protein to the mitochondrion. Residue Ser-67 is modified to Phosphoserine. Residues 69–175 (DKITVHFKNR…NMTVRVPEAV (107 aa)) form the 2Fe-2S ferredoxin-type domain. Residue Lys-70 is modified to N6-acetyllysine; alternate. Lys-70 carries the post-translational modification N6-succinyllysine; alternate. Cys-110, Cys-116, Cys-119, and Cys-156 together coordinate [2Fe-2S] cluster. The residue at position 162 (Lys-162) is an N6-succinyllysine. At Ser-181 the chain carries Phosphoserine.

This sequence belongs to the adrenodoxin/putidaredoxin family. As to quaternary structure, interacts with CYP11A1. [2Fe-2S] cluster serves as cofactor.

The protein localises to the mitochondrion matrix. Functionally, essential for the synthesis of various steroid hormones, participates in the reduction of mitochondrial cytochrome P450 for steroidogenesis. Transfers electrons from adrenodoxin reductase to CYP11A1, a cytochrome P450 that catalyzes cholesterol side-chain cleavage. Does not form a ternary complex with adrenodoxin reductase and CYP11A1 but shuttles between the two enzymes to transfer electrons. This chain is Adrenodoxin, mitochondrial (Fdx1), found in Mus musculus (Mouse).